We begin with the raw amino-acid sequence, 356 residues long: Phosphotriesterase-related protein (356 aa).

Residues His23, His25, Glu175, His207, His236, and Asp304 each contribute to the a divalent metal cation site.

This sequence belongs to the metallo-dependent hydrolases superfamily. Phosphotriesterase family. A divalent metal cation is required as a cofactor.

In Aedes aegypti (Yellowfever mosquito), this protein is Phosphotriesterase-related protein.